A 155-amino-acid polypeptide reads, in one-letter code: Endoribonuclease YbeY (155 aa).

Residues histidine 119, histidine 123, and histidine 129 each contribute to the Zn(2+) site.

This sequence belongs to the endoribonuclease YbeY family. Zn(2+) is required as a cofactor.

It is found in the cytoplasm. Its function is as follows. Single strand-specific metallo-endoribonuclease involved in late-stage 70S ribosome quality control and in maturation of the 3' terminus of the 16S rRNA. This is Endoribonuclease YbeY from Mycoplasmopsis synoviae (strain 53) (Mycoplasma synoviae).